The sequence spans 276 residues: Hydroxyethylthiazole kinase (276 aa).

Residues Arg126 and Ser172 each contribute to the ATP site. Gly199 provides a ligand contact to substrate.

Belongs to the Thz kinase family. It depends on Mg(2+) as a cofactor.

It catalyses the reaction 5-(2-hydroxyethyl)-4-methylthiazole + ATP = 4-methyl-5-(2-phosphooxyethyl)-thiazole + ADP + H(+). It participates in cofactor biosynthesis; thiamine diphosphate biosynthesis; 4-methyl-5-(2-phosphoethyl)-thiazole from 5-(2-hydroxyethyl)-4-methylthiazole: step 1/1. In terms of biological role, catalyzes the phosphorylation of the hydroxyl group of 4-methyl-5-beta-hydroxyethylthiazole (THZ). The polypeptide is Hydroxyethylthiazole kinase (Burkholderia pseudomallei (strain 1106a)).